The primary structure comprises 179 residues: UPF0227 protein Shewmr4_1727 (179 aa).

This sequence belongs to the UPF0227 family.

The chain is UPF0227 protein Shewmr4_1727 from Shewanella sp. (strain MR-4).